The sequence spans 317 residues: Putative GTPase PH0274 (317 aa).

Residues Gly-54–Thr-62, Asp-196, and Val-231–Thr-233 contribute to the GTP site.

Belongs to the SIMIBI class G3E GTPase family. ArgK/MeaB subfamily.

Its function is as follows. May have GTPase activity. May also bind and hydrolyze ATP. May function as chaperone. The polypeptide is Putative GTPase PH0274 (Pyrococcus horikoshii (strain ATCC 700860 / DSM 12428 / JCM 9974 / NBRC 100139 / OT-3)).